The chain runs to 210 residues: Probable GTP-binding protein EngB (210 aa).

The 175-residue stretch at Thr25–Glu199 folds into the EngB-type G domain. Residues Gly33–Ser40, Gly60–Leu64, Asp78–Gly81, Thr145–Asp148, and Phe178–Ser180 contribute to the GTP site. Mg(2+) contacts are provided by Ser40 and Thr62.

The protein belongs to the TRAFAC class TrmE-Era-EngA-EngB-Septin-like GTPase superfamily. EngB GTPase family. Mg(2+) is required as a cofactor.

Its function is as follows. Necessary for normal cell division and for the maintenance of normal septation. The polypeptide is Probable GTP-binding protein EngB (Escherichia coli O6:H1 (strain CFT073 / ATCC 700928 / UPEC)).